Here is a 151-residue protein sequence, read N- to C-terminus: Transcription antitermination protein NusB (151 aa).

Belongs to the NusB family.

In terms of biological role, involved in transcription antitermination. Required for transcription of ribosomal RNA (rRNA) genes. Binds specifically to the boxA antiterminator sequence of the ribosomal RNA (rrn) operons. The protein is Transcription antitermination protein NusB of Thermus thermophilus (strain ATCC BAA-163 / DSM 7039 / HB27).